The following is a 177-amino-acid chain: Gamma-crystallin M1-2 (177 aa).

Beta/gamma crystallin 'Greek key' domains lie at G2–N40 and G41–S83. The tract at residues Q84–T90 is connecting peptide. Beta/gamma crystallin 'Greek key' domains lie at N91–D131 and G132–I174.

The protein belongs to the beta/gamma-crystallin family. As to quaternary structure, monomer.

In terms of biological role, crystallins are the dominant structural components of the vertebrate eye lens. The chain is Gamma-crystallin M1-2 from Aquarana catesbeiana (American bullfrog).